We begin with the raw amino-acid sequence, 1300 residues long: Zinc finger protein 536 (1300 aa).

Disordered stretches follow at residues 1–26 (MEEASLCLGVSSAEPEAEPHLSGPVL) and 47–77 (FPELHPRPNPEEKPPASLEEKAHVPMSGQPM). The segment covering 48-69 (PELHPRPNPEEKPPASLEEKAH) has biased composition (basic and acidic residues). C2H2-type zinc fingers lie at residues 130 to 152 (YPCPLCGKRFRFNSILSLHMRTH), 158 to 180 (FKCPYCDHRAAQKGNLKIHLRTH), 274 to 297 (FRCTFCKGKFKKREELDRHIRILH), 300 to 323 (YKCTLCDFAASQEEELISHVEKAH), 345 to 367 (FRCEVCGQVFSQAWFLKGHMRKH), and 373 to 395 (HCCQICGRRFKEPWFLKNHMKVH). Disordered regions lie at residues 584-604 (HSTKVGSQRDLPSKLDPLESS) and 650-739 (SRVH…QQPA). The span at 594 to 604 (LPSKLDPLESS) shows a compositional bias: basic and acidic residues. Residues 631–653 (TECPDCGRVFRTYHQVVVHSRVH) form a C2H2-type 7 zinc finger. The span at 657 to 674 (RKGEEDGLHVGLDERRGS) shows a compositional bias: basic and acidic residues. Positions 675–696 (GSDQESQSVSRSTTPGSSNVTE) are enriched in polar residues. 2 consecutive C2H2-type zinc fingers follow at residues 751 to 773 (KDCPYCGKTFRTSHHLKVHLRIH) and 779 to 801 (YKCPHCDYAGTQSASLKYHLERH). Residues 802–826 (HRERQNGAGPLSGQPPNQDHKDEMS) are disordered. S826 and S827 each carry phosphoserine. The segment covering 856–880 (SQQWTSGVLSSGDHSGQATGMSSEV) has biased composition (polar residues). Disordered stretches follow at residues 856–893 (SQQWTSGVLSSGDHSGQATGMSSEVPSDALKGTDLPSK), 937–985 (KDKA…PDAA), and 1124–1260 (SGAS…SLDK). 2 stretches are compositionally biased toward basic and acidic residues: residues 950–972 (HGVDGGEEKPSGKSSQRKSEKSQ) and 1133–1143 (KEPDGKAHSEE). Acidic residues-rich tracts occupy residues 1160 to 1170 (DLSDIASSEDM) and 1178 to 1187 (NDEEDVETEP). Over residues 1194–1209 (LSALSKDSSSDGGDSL) the composition is skewed to low complexity.

The protein belongs to the krueppel C2H2-type zinc-finger protein family.

Its subcellular location is the nucleus. Transcriptional repressor that negatively regulates neuron differentiation by repressing retinoic acid-induced gene transcription. Binds and interrupts RARA from binding to retinoic acid response elements (RARE) composed of tandem 5'-AGGTCA-3' sites known as DR1-DR5. Recognizes and binds 2 copies of the core DNA sequence 5'-CCCCCA-3'. This Homo sapiens (Human) protein is Zinc finger protein 536 (ZNF536).